The sequence spans 531 residues: Nuclear RNA export factor 3 (531 aa).

Disordered regions lie at residues 33 to 59 and 83 to 106; these read RSEP…HGAH and QDQT…GNMP. Positions 41 to 50 are enriched in polar residues; it reads MHSSSHQQQD. Residues 83–102 are compositionally biased toward basic and acidic residues; it reads QDQTHVNMEREQKPPERRME. The RRM domain occupies 113–192; it reads WFKITVPFGI…IFVNPAGIPH (80 aa). The region spanning 344-494 is the NTF2 domain; sequence LVLQFLQQYY…LCIVNDKLFV (151 aa).

It belongs to the NXF family. Interacts with NXT1, NXT2, E1B-AP5 and CRM1 nuclear export factor. In terms of tissue distribution, expressed at high level in testis and at low level in a small number of tissues.

The protein resides in the nucleus. The protein localises to the cytoplasm. May function as a tissue-specific nuclear mRNA export factor. The sequence is that of Nuclear RNA export factor 3 (NXF3) from Homo sapiens (Human).